A 428-amino-acid polypeptide reads, in one-letter code: Serine--tRNA ligase (428 aa).

235-237 (TAE) lines the L-serine pocket. 266 to 268 (RSE) contributes to the ATP binding site. Glu-289 is a binding site for L-serine. 353–356 (EISS) provides a ligand contact to ATP. Ser-389 lines the L-serine pocket.

The protein belongs to the class-II aminoacyl-tRNA synthetase family. Type-1 seryl-tRNA synthetase subfamily. As to quaternary structure, homodimer. The tRNA molecule binds across the dimer.

Its subcellular location is the cytoplasm. The enzyme catalyses tRNA(Ser) + L-serine + ATP = L-seryl-tRNA(Ser) + AMP + diphosphate + H(+). It carries out the reaction tRNA(Sec) + L-serine + ATP = L-seryl-tRNA(Sec) + AMP + diphosphate + H(+). The protein operates within aminoacyl-tRNA biosynthesis; selenocysteinyl-tRNA(Sec) biosynthesis; L-seryl-tRNA(Sec) from L-serine and tRNA(Sec): step 1/1. In terms of biological role, catalyzes the attachment of serine to tRNA(Ser). Is also able to aminoacylate tRNA(Sec) with serine, to form the misacylated tRNA L-seryl-tRNA(Sec), which will be further converted into selenocysteinyl-tRNA(Sec). This Shewanella sp. (strain ANA-3) protein is Serine--tRNA ligase.